Consider the following 365-residue polypeptide: Casein kinase I homolog hhp1 (365 aa).

A Protein kinase domain is found at 11–279 (YRIGRKIGSG…YLRKLFRDLF (269 aa)). ATP-binding positions include 17-25 (IGSGSFGDI) and K40. The active-site Proton acceptor is the D130. Residues 301–311 (DQQHQQQLQQQ) show a composition bias toward low complexity. The tract at residues 301-365 (DQQHQQQLQQ…TGAQYINRPN (65 aa)) is disordered. The span at 343–365 (INTTVPVINDPSATGAQYINRPN) shows a compositional bias: polar residues.

It belongs to the protein kinase superfamily. CK1 Ser/Thr protein kinase family. Casein kinase I subfamily.

It localises to the nucleus. It catalyses the reaction L-seryl-[protein] + ATP = O-phospho-L-seryl-[protein] + ADP + H(+). The enzyme catalyses L-threonyl-[protein] + ATP = O-phospho-L-threonyl-[protein] + ADP + H(+). Its function is as follows. Involved in DNA repair. Has a probable role in repairing alkylated DNA and may regulate the activity of protein(s) involved in double strand break repair caused by gamma rays. The sequence is that of Casein kinase I homolog hhp1 (hhp1) from Schizosaccharomyces pombe (strain 972 / ATCC 24843) (Fission yeast).